The sequence spans 514 residues: 2,3-bisphosphoglycerate-independent phosphoglycerate mutase (514 aa).

Residues Asp-14 and Ser-64 each contribute to the Mn(2+) site. The active-site Phosphoserine intermediate is Ser-64. Substrate-binding positions include His-125, 155 to 156 (RD), Arg-187, Arg-193, 263 to 266 (RADR), and Lys-336. Positions 403, 407, 444, 445, and 463 each coordinate Mn(2+).

The protein belongs to the BPG-independent phosphoglycerate mutase family. As to quaternary structure, monomer. Requires Mn(2+) as cofactor.

It catalyses the reaction (2R)-2-phosphoglycerate = (2R)-3-phosphoglycerate. Its pathway is carbohydrate degradation; glycolysis; pyruvate from D-glyceraldehyde 3-phosphate: step 3/5. Its function is as follows. Catalyzes the interconversion of 2-phosphoglycerate and 3-phosphoglycerate. The protein is 2,3-bisphosphoglycerate-independent phosphoglycerate mutase of Shewanella sp. (strain MR-7).